The sequence spans 416 residues: Gamma-glutamyl phosphate reductase (416 aa).

This sequence belongs to the gamma-glutamyl phosphate reductase family.

The protein resides in the cytoplasm. It catalyses the reaction L-glutamate 5-semialdehyde + phosphate + NADP(+) = L-glutamyl 5-phosphate + NADPH + H(+). The protein operates within amino-acid biosynthesis; L-proline biosynthesis; L-glutamate 5-semialdehyde from L-glutamate: step 2/2. Catalyzes the NADPH-dependent reduction of L-glutamate 5-phosphate into L-glutamate 5-semialdehyde and phosphate. The product spontaneously undergoes cyclization to form 1-pyrroline-5-carboxylate. The polypeptide is Gamma-glutamyl phosphate reductase (Salmonella paratyphi A (strain AKU_12601)).